A 788-amino-acid chain; its full sequence is Protein translocase subunit SecA 2 (788 aa).

ATP contacts are provided by residues glutamine 86, 104-108 (GEGKT), and aspartate 493.

The protein belongs to the SecA family. In terms of assembly, monomer and homodimer. Part of the essential Sec protein translocation apparatus which comprises SecA, SecYEG and auxiliary proteins SecDF. Other proteins may also be involved.

The protein resides in the cell membrane. It is found in the cytoplasm. The catalysed reaction is ATP + H2O + cellular proteinSide 1 = ADP + phosphate + cellular proteinSide 2.. Its function is as follows. Part of the Sec protein translocase complex. Interacts with the SecYEG preprotein conducting channel. Has a central role in coupling the hydrolysis of ATP to the transfer of proteins into and across the cell membrane, serving as an ATP-driven molecular motor driving the stepwise translocation of polypeptide chains across the membrane. The chain is Protein translocase subunit SecA 2 from Bacillus anthracis.